A 317-amino-acid polypeptide reads, in one-letter code: Large ribosomal subunit protein uL10 (317 aa).

Residues 286–317 (AGAGAAAEKKEEAKKEESESEEDDDMGFGLFD) are disordered. Residues 292-302 (AEKKEEAKKEE) are compositionally biased toward basic and acidic residues.

This sequence belongs to the universal ribosomal protein uL10 family. In terms of assembly, P0 forms a pentameric complex by interaction with dimers of P1 and P2. Post-translationally, phosphorylated.

Functionally, ribosomal protein P0 is the functional equivalent of E.coli protein L10. The polypeptide is Large ribosomal subunit protein uL10 (RpLP0) (Ceratitis capitata (Mediterranean fruit fly)).